A 217-amino-acid polypeptide reads, in one-letter code: Large ribosomal subunit protein uL1 (217 aa).

This sequence belongs to the universal ribosomal protein uL1 family. Component of the large ribosomal subunit (LSU). Mature ribosomes consist of a small (40S) and a large (60S) subunit. The 40S subunit contains about 32 different proteins and 1 molecule of RNA (18S). The 60S subunit contains 45 different proteins and 3 molecules of RNA (25S, 5.8S and 5S). uL1 forms part of the L1 stalk.

It localises to the cytoplasm. Component of the ribosome, a large ribonucleoprotein complex responsible for the synthesis of proteins in the cell. The small ribosomal subunit (SSU) binds messenger RNAs (mRNAs) and translates the encoded message by selecting cognate aminoacyl-transfer RNA (tRNA) molecules. The large subunit (LSU) contains the ribosomal catalytic site termed the peptidyl transferase center (PTC), which catalyzes the formation of peptide bonds, thereby polymerizing the amino acids delivered by tRNAs into a polypeptide chain. The nascent polypeptides leave the ribosome through a tunnel in the LSU and interact with protein factors that function in enzymatic processing, targeting, and the membrane insertion of nascent chains at the exit of the ribosomal tunnel. uL1 forms part of the L1 stalk, a mobile element that plays a role in evacuating the exit-site tRNA. This Candida albicans (strain SC5314 / ATCC MYA-2876) (Yeast) protein is Large ribosomal subunit protein uL1 (RPL10A).